The primary structure comprises 558 residues: Urease subunit alpha 2 (558 aa).

The Urease domain maps to 129–558 (GAVDTHVHLL…SVSLNRLYFL (430 aa)). Residues His134, His136, and Lys214 each contribute to the Ni(2+) site. Position 214 is an N6-carboxylysine (Lys214). Residue His216 coordinates substrate. Ni(2+) contacts are provided by His243 and His269. His317 (proton donor) is an active-site residue. Position 357 (Asp357) interacts with Ni(2+).

It belongs to the metallo-dependent hydrolases superfamily. Urease alpha subunit family. As to quaternary structure, may form a heterohexamer of 3 UreC (alpha) and 3 UreAB (gamma/beta) subunits. May also form a heterotrimer of UreA (gamma), UreB (beta) and UreC (alpha) subunits. Three heterotrimers associate to form the active enzyme. It depends on Ni cation as a cofactor. In terms of processing, carboxylation allows a single lysine to coordinate two nickel ions.

It localises to the cytoplasm. The catalysed reaction is urea + 2 H2O + H(+) = hydrogencarbonate + 2 NH4(+). Its pathway is nitrogen metabolism; urea degradation; CO(2) and NH(3) from urea (urease route): step 1/1. This is Urease subunit alpha 2 from Streptomyces coelicolor (strain ATCC BAA-471 / A3(2) / M145).